Here is a 293-residue protein sequence, read N- to C-terminus: Nucleotide-binding protein BCQ_4976 (293 aa).

14-21 (GMSGAGKT) contacts ATP. 65-68 (DLRG) provides a ligand contact to GTP.

It belongs to the RapZ-like family.

In terms of biological role, displays ATPase and GTPase activities. This is Nucleotide-binding protein BCQ_4976 from Bacillus cereus (strain Q1).